Consider the following 145-residue polypeptide: Large ribosomal subunit protein bL17 (145 aa).

Belongs to the bacterial ribosomal protein bL17 family. In terms of assembly, part of the 50S ribosomal subunit. Contacts protein L32.

This is Large ribosomal subunit protein bL17 from Orientia tsutsugamushi (strain Boryong) (Rickettsia tsutsugamushi).